The primary structure comprises 102 residues: Thioredoxin (102 aa).

The Thioredoxin domain maps to 1 to 102 (MVQIVSQDNF…SLVKLISKHQ (102 aa)). An intrachain disulfide couples cysteine 28 to cysteine 31.

The protein belongs to the thioredoxin family.

In terms of biological role, participates in various redox reactions through the reversible oxidation of its active center dithiol to a disulfide and catalyzes dithiol-disulfide exchange reactions. The polypeptide is Thioredoxin (trxA) (Chlamydia muridarum (strain MoPn / Nigg)).